We begin with the raw amino-acid sequence, 694 residues long: MSAPEDLLLELGCEELPAREQMPLQDAATGIIGQLLDAAGLQFGSIHGYVTPRRLALWIKDVSRQSLPQETLRRGPLVARARDAQGKPTAAAEGFARSCGVSLDDLLTLETEKGPVLAWREVGTAQDSHALLPEIASRLVTSLPLRKRMRWGAGSDSFLRPVRWLLLRQGGQVLDWKMFGLDAGGESFGHRVHHPQAVRISTPAGYAGSLLQAKVMVDFAERRAHISGKMAALADEMAVTPILPEALLDEITGLNEWPVVLAGSFAADYLRVPEEALITVMMQHQRYVPLRGRNERLVPHYLFAANLHSRDTQVVIDGNNRVLRARLADAAFFWDQDRQISLQTRRAALAGVLFQDGLGSILDKTVRLQELAAALSPQFAVDAGDMNRAAALCKSDLLSGLVGEFPELQGIMGGHYARHDGENNRVATAIAQHYLPSGRDDEIPADAHGQCLAIADKLDTLCGFFAIGKVPTGDRDPFALRRAALGVLRIVLDAGVPLNLDEAVTRTLAAYGGAFARNRTEIRSAILDFFQDRMRVYFREEGFRADQIAAVLSRQPHEPLDARQRLEALALFQAEHAAADALAALIKRINNLLRKEVISGDWPIDPQYFMDPVENTLWDYWQALEQPLHAQLAERRYTAALGLLAGLRPAVDQFFDGVMVLAEDPVLRQNRLALLARLQEAFLRIADFSQLQGA.

It belongs to the class-II aminoacyl-tRNA synthetase family. Tetramer of two alpha and two beta subunits.

The protein resides in the cytoplasm. It carries out the reaction tRNA(Gly) + glycine + ATP = glycyl-tRNA(Gly) + AMP + diphosphate. This is Glycine--tRNA ligase beta subunit from Acidithiobacillus ferrooxidans (strain ATCC 23270 / DSM 14882 / CIP 104768 / NCIMB 8455) (Ferrobacillus ferrooxidans (strain ATCC 23270)).